The following is a 145-amino-acid chain: 3-hydroxyacyl-[acyl-carrier-protein] dehydratase FabZ (145 aa).

The active site involves histidine 51.

The protein belongs to the thioester dehydratase family. FabZ subfamily.

It is found in the cytoplasm. It catalyses the reaction a (3R)-hydroxyacyl-[ACP] = a (2E)-enoyl-[ACP] + H2O. Involved in unsaturated fatty acids biosynthesis. Catalyzes the dehydration of short chain beta-hydroxyacyl-ACPs and long chain saturated and unsaturated beta-hydroxyacyl-ACPs. The protein is 3-hydroxyacyl-[acyl-carrier-protein] dehydratase FabZ of Macrococcus caseolyticus (strain JCSC5402) (Macrococcoides caseolyticum).